The sequence spans 643 residues: Phosphatidylinositol-3,5-bisphosphate 3-phosphatase MTMR2 (643 aa).

Composition is skewed to polar residues over residues 1–12 (MEKSSSCESLGS) and 23–40 (DSLS…VHTK). The disordered stretch occupies residues 1–56 (MEKSSSCESLGSQPAAARPPSVDSLSSASTSHSENSVHTKSASVVSSDSISTSADN). 2 positions are modified to phosphoserine: S6 and S9. A compositionally biased stretch (low complexity) spans 41–55 (SASVVSSDSISTSAD). S58 is subject to Phosphoserine. In terms of domain architecture, GRAM spans 68–139 (NKLAEMEEPP…GVINRVEKIG (72 aa)). The region spanning 205–580 (GWKLYDPLLE…RHLELWVGYY (376 aa)) is the Myotubularin phosphatase domain. A 1,2-diacyl-sn-glycero-3-phospho-(1D-myo-inositol-3,5-bisphosphate) contacts are provided by N330, N355, and I356. N330, N355, and I356 together coordinate a 1,2-diacyl-sn-glycero-3-phospho-(1D-myo-inositol-3-phosphate). The active-site Phosphocysteine intermediate is the C417. A 1,2-diacyl-sn-glycero-3-phospho-(1D-myo-inositol-3,5-bisphosphate) contacts are provided by S418, D419, G420, W421, D422, R423, R459, and R463. S418, D419, G420, W421, D422, and R423 together coordinate a 1,2-diacyl-sn-glycero-3-phospho-(1D-myo-inositol-3-phosphate). Residue R463 coordinates a 1,2-diacyl-sn-glycero-3-phospho-(1D-myo-inositol-3-phosphate). Residues 593–627 (IHNRYKELLAKRAELQKKVEELQREISNRSTSSSE) are a coiled coil. A disordered region spans residues 615-643 (QREISNRSTSSSERASSPAQCVTPVQTVV). The span at 620-631 (NRSTSSSERASS) shows a compositional bias: low complexity. A compositionally biased stretch (polar residues) spans 632 to 643 (PAQCVTPVQTVV).

Belongs to the protein-tyrosine phosphatase family. Non-receptor class myotubularin subfamily. As to quaternary structure, homodimer (via coiled-coil domain). Heterotetramer consisting of one MTMR2 dimer and one SBF2/MTMR13 dimer; specifically in peripheral nerves stabilizes SBF2/MTMR13 at the membranes and increases MTMR2 catalytic activity towards phosphatidylinositol 3,5-bisphosphate and to a lesser extent towards phosphatidylinositol 3-phosphate. Heterodimer with SBF1/MTMR5; acts as an adapter for the phosphatase MTMR2 to regulate MTMR2 catalytic activity and subcellular location. Heterodimer with MTMR12. Phosphorylation at Ser-58 decreases MTMR2 localization to endocytic vesicular structures.

It localises to the cytoplasm. The protein resides in the early endosome membrane. Its subcellular location is the perinuclear region. It is found in the cell projection. The protein localises to the axon. It localises to the endosome membrane. It catalyses the reaction a 1,2-diacyl-sn-glycero-3-phospho-(1D-myo-inositol-3,5-bisphosphate) + H2O = a 1,2-diacyl-sn-glycero-3-phospho-(1D-myo-inositol-5-phosphate) + phosphate. The enzyme catalyses a 1,2-diacyl-sn-glycero-3-phospho-(1D-myo-inositol-3-phosphate) + H2O = a 1,2-diacyl-sn-glycero-3-phospho-(1D-myo-inositol) + phosphate. The catalysed reaction is 1,2-dioctanoyl-sn-glycero-3-phospho-(1-D-myo-inositol-3-phosphate) + H2O = 1,2-dioctanoyl-sn-glycero-3-phospho-(1D-myo-inositol) + phosphate. It carries out the reaction 1,2-dioctanoyl-sn-glycero-3-phospho-(1D-myo-inositol-3,5-bisphosphate) + H2O = 1,2-dioctanoyl-sn-glycero-3-phospho-(1D-myo-inositol-5-phosphate) + phosphate. Its function is as follows. Lipid phosphatase that specifically dephosphorylates the D-3 position of phosphatidylinositol 3-phosphate and phosphatidylinositol 3,5-bisphosphate, generating phosphatidylinositol and phosphatidylinositol 5-phosphate. Regulates the level of these phosphoinositides critical for various biological processes including autophagy initiation and autophagosome maturation. The polypeptide is Phosphatidylinositol-3,5-bisphosphate 3-phosphatase MTMR2 (Homo sapiens (Human)).